The chain runs to 740 residues: MAAFSEMGVMPEIAQAVEEMDWLLPTDIQAESIPLILGGGDVLMAAETGSGKTGAFSIPVIQIVYETLKDQQEGKKGKTTIKTGASVLNKWQMNPYDRGSAFAIGSDGLCCQSREVKEWHGCRGTRGLLKGKHYYEVSCHDQGLCRVGWSTMQASLDLGTDKFGFGFGGTGKKSHNKQFDNYGEEFTMHDTIGCYLDIDKGHVKFSKNGKDLGLAFEIPAHIKNQALFPACVLKNAELKFNFGEEEFKFPPKDGFVALSKAPDNYIVKSQHTGNAQVSQTKFLPNAPKALIVEPSRELAEQTLNNVKQFKKYIDNPKLRELLIIGGVAARDQLSVLDNGVDIVVGTPGRLDDLVSTGKLNLSQVRFLVLDEADGLLSQGYSDFINRMHNQIPQITCDGKRLQVIVCSATLHSFDVKKLSEKIMHFPTWVDLKGEDSVPDTVHHVVVPVNPKTDKLWERLGKNHIRTDDVHAKDNTRPGANSPEMWSEAIKILKGEYAVRAIKEHKMDQAIIFCRTKIDCDNLEQYFMQQGGGPDKKGHQFSCVCLHGDRKPHERKQNLERFKKGDVRFLICTDVAARGIDIHGVPYVINVTLPDEKQNYVHRIGRVGRAERMGLAISLVATEKEKVWYHVCSNRGKGCYNTRLKEDGGCTIWYNEMQLLSEIEEHLNCTISQVEPDIKVPVDEFDGKVTYGQKRAAGGGNYKGHVDVLAPTVQELAALEKEAQTSFLHLGYLPNQLFRTF.

Residues 1–295 (MAAFSEMGVM…APKALIVEPS (295 aa)) are necessary for interaction with HNRNPK. An interaction with dsRNA region spans residues 1–448 (MAAFSEMGVM…DTVHHVVVPV (448 aa)). The tract at residues 1 to 525 (MAAFSEMGVM…KIDCDNLEQY (525 aa)) is necessary for interaction with RELA. The Helicase ATP-binding domain maps to 2–428 (AAFSEMGVMP…SEKIMHFPTW (427 aa)). An ATP-binding site is contributed by 46–53 (AETGSGKT). The 178-residue stretch at 70-247 (DQQEGKKGKT…LKFNFGEEEF (178 aa)) folds into the B30.2/SPRY domain. Residues K239 and K268 each carry the N6-acetyllysine modification. N6-acetyllysine; alternate is present on K281. K281 is covalently cross-linked (Glycyl lysine isopeptide (Lys-Gly) (interchain with G-Cter in SUMO2); alternate). A DEAD box motif is present at residues 370–373 (DEAD). Position 481 is a phosphoserine (S481). In terms of domain architecture, Helicase C-terminal spans 493-681 (KGEYAVRAIK…QVEPDIKVPV (189 aa)). The tract at residues 525–740 (YFMQQGGGPD…YLPNQLFRTF (216 aa)) is necessary for interaction with HNRNPK.

The protein belongs to the DEAD box helicase family. DDX1 subfamily. In terms of assembly, found in a multi-helicase-TICAM1 complex at least composed of DHX36, DDX1, DDX21 and TICAM1; this complex exists in resting cells with or without poly(I:C) RNA ligand stimulation. Interacts with DHX36. Interacts (via B30.2/SPRY domain) with DDX21 (via N-terminus); this interaction serves as bridges to TICAM1. Interacts with FAM98A (via N- and C-terminus). Interacts with MBNL1. Interacts with CSTF2. Interacts with HNRNPK. Interacts with ATM. Interacts with RELA (via C-terminus). Component of the tRNA-splicing ligase complex. Interacts with PHF5A (via C-terminus). Interacts with PQBP1. Interacts with ERCC6. Phosphorylated by ATM kinase; phosphorylation is increased in response to ionizing radiation (IR). Testis-specific. Expressed in the germ line stem cells, spermatogonia and spermatocytes of the testis. Also expressed in the seminoma and nonseminoma types of testicular germ cell tumors (TGCTs) (at protein level).

Its subcellular location is the nucleus. The protein resides in the cytoplasm. The protein localises to the cytosol. It localises to the cytoplasmic granule. It is found in the mitochondrion. It catalyses the reaction ATP + H2O = ADP + phosphate + H(+). Acts as an ATP-dependent RNA helicase, able to unwind both RNA-RNA and RNA-DNA duplexes. Possesses 5' single-stranded RNA overhang nuclease activity. Possesses ATPase activity on various RNA, but not DNA polynucleotides. May play a role in RNA clearance at DNA double-strand breaks (DSBs), thereby facilitating the template-guided repair of transcriptionally active regions of the genome. Together with RELA, acts as a coactivator to enhance NF-kappa-B-mediated transcriptional activation. Acts as a positive transcriptional regulator of cyclin CCND2 expression. Binds to the cyclin CCND2 promoter region. Associates with chromatin at the NF-kappa-B promoter region via association with RELA. Binds to poly(A) RNA. May be involved in 3'-end cleavage and polyadenylation of pre-mRNAs. Component of the tRNA-splicing ligase complex required to facilitate the enzymatic turnover of catalytic subunit RTCB: together with archease (ZBTB8OS), acts by facilitating the guanylylation of RTCB, a key intermediate step in tRNA ligation. Component of a multi-helicase-TICAM1 complex that acts as a cytoplasmic sensor of viral double-stranded RNA (dsRNA) and plays a role in the activation of a cascade of antiviral responses including the induction of pro-inflammatory cytokines via the adapter molecule TICAM1. Specifically binds (via helicase ATP-binding domain) on both short and long poly(I:C) dsRNA. This Mus musculus (Mouse) protein is ATP-dependent RNA helicase DDX1 (Ddx1).